We begin with the raw amino-acid sequence, 473 residues long: Siroheme synthase 2 (473 aa).

The precorrin-2 dehydrogenase /sirohydrochlorin ferrochelatase stretch occupies residues 1-204; that stretch reads MDYFPIFCQL…NDHVQADQHV (204 aa). NAD(+) contacts are provided by residues 22-23 and 43-44; these read EI and CE. The residue at position 128 (Ser-128) is a Phosphoserine. The interval 216–473 is uroporphyrinogen-III C-methyltransferase; it reads GEVVLVGAGP…KVTECVAHVG (258 aa). Pro-225 serves as a coordination point for S-adenosyl-L-methionine. The Proton acceptor role is filled by Asp-248. Lys-270 serves as the catalytic Proton donor. Residues 301 to 303, Ile-306, 331 to 332, Met-382, and Gly-411 contribute to the S-adenosyl-L-methionine site; these read GGD and TA.

In the N-terminal section; belongs to the precorrin-2 dehydrogenase / sirohydrochlorin ferrochelatase family. This sequence in the C-terminal section; belongs to the precorrin methyltransferase family.

The catalysed reaction is uroporphyrinogen III + 2 S-adenosyl-L-methionine = precorrin-2 + 2 S-adenosyl-L-homocysteine + H(+). The enzyme catalyses precorrin-2 + NAD(+) = sirohydrochlorin + NADH + 2 H(+). It catalyses the reaction siroheme + 2 H(+) = sirohydrochlorin + Fe(2+). It functions in the pathway cofactor biosynthesis; adenosylcobalamin biosynthesis; precorrin-2 from uroporphyrinogen III: step 1/1. The protein operates within cofactor biosynthesis; adenosylcobalamin biosynthesis; sirohydrochlorin from precorrin-2: step 1/1. It participates in porphyrin-containing compound metabolism; siroheme biosynthesis; precorrin-2 from uroporphyrinogen III: step 1/1. Its pathway is porphyrin-containing compound metabolism; siroheme biosynthesis; siroheme from sirohydrochlorin: step 1/1. It functions in the pathway porphyrin-containing compound metabolism; siroheme biosynthesis; sirohydrochlorin from precorrin-2: step 1/1. Its function is as follows. Multifunctional enzyme that catalyzes the SAM-dependent methylations of uroporphyrinogen III at position C-2 and C-7 to form precorrin-2 via precorrin-1. Then it catalyzes the NAD-dependent ring dehydrogenation of precorrin-2 to yield sirohydrochlorin. Finally, it catalyzes the ferrochelation of sirohydrochlorin to yield siroheme. The chain is Siroheme synthase 2 from Yersinia pseudotuberculosis serotype O:1b (strain IP 31758).